We begin with the raw amino-acid sequence, 442 residues long: D-inositol 3-phosphate glycosyltransferase (442 aa).

Histidine 15 serves as a coordination point for 1D-myo-inositol 3-phosphate. UDP-N-acetyl-alpha-D-glucosamine-binding positions include 21–22 (QP) and glycine 29. Residues 26-31 (DAGGMN), lysine 84, tyrosine 117, threonine 141, and arginine 161 contribute to the 1D-myo-inositol 3-phosphate site. UDP-N-acetyl-alpha-D-glucosamine is bound by residues arginine 235, lysine 240, and glutamine 299. Tyrosine 308, arginine 309, and serine 311 together coordinate Mg(2+). The UDP-N-acetyl-alpha-D-glucosamine site is built by glutamate 321 and glutamate 329. Threonine 335 lines the Mg(2+) pocket.

The protein belongs to the glycosyltransferase group 1 family. MshA subfamily. In terms of assembly, homodimer.

The enzyme catalyses 1D-myo-inositol 3-phosphate + UDP-N-acetyl-alpha-D-glucosamine = 1D-myo-inositol 2-acetamido-2-deoxy-alpha-D-glucopyranoside 3-phosphate + UDP + H(+). Its function is as follows. Catalyzes the transfer of a N-acetyl-glucosamine moiety to 1D-myo-inositol 3-phosphate to produce 1D-myo-inositol 2-acetamido-2-deoxy-glucopyranoside 3-phosphate in the mycothiol biosynthesis pathway. This chain is D-inositol 3-phosphate glycosyltransferase, found in Rhodococcus erythropolis (strain PR4 / NBRC 100887).